The sequence spans 279 residues: NH(3)-dependent NAD(+) synthetase (279 aa).

39-46 (GLSGGIDS) contacts ATP. Residue D45 participates in Mg(2+) binding. R122 is a deamido-NAD(+) binding site. ATP is bound at residue T142. Residue E147 participates in Mg(2+) binding. Deamido-NAD(+) contacts are provided by K155 and D162. Residues K171 and S193 each coordinate ATP. 253–254 (HK) provides a ligand contact to deamido-NAD(+).

Belongs to the NAD synthetase family. Homodimer.

It catalyses the reaction deamido-NAD(+) + NH4(+) + ATP = AMP + diphosphate + NAD(+) + H(+). It participates in cofactor biosynthesis; NAD(+) biosynthesis; NAD(+) from deamido-NAD(+) (ammonia route): step 1/1. Functionally, catalyzes the ATP-dependent amidation of deamido-NAD to form NAD. Uses ammonia as a nitrogen source. This is NH(3)-dependent NAD(+) synthetase from Sulfolobus acidocaldarius (strain ATCC 33909 / DSM 639 / JCM 8929 / NBRC 15157 / NCIMB 11770).